The chain runs to 453 residues: Kynureninase (453 aa).

Residues Leu-114, Thr-115, 142 to 145, Asp-232, His-235, and Tyr-257 contribute to the pyridoxal 5'-phosphate site; that span reads FPSD. Lys-258 carries the post-translational modification N6-(pyridoxal phosphate)lysine. A pyridoxal 5'-phosphate-binding site is contributed by Trp-286.

The protein belongs to the kynureninase family. As to quaternary structure, homodimer. Requires pyridoxal 5'-phosphate as cofactor.

Its subcellular location is the cytoplasm. It catalyses the reaction L-kynurenine + H2O = anthranilate + L-alanine + H(+). The catalysed reaction is 3-hydroxy-L-kynurenine + H2O = 3-hydroxyanthranilate + L-alanine + H(+). The protein operates within amino-acid degradation; L-kynurenine degradation; L-alanine and anthranilate from L-kynurenine: step 1/1. Its pathway is cofactor biosynthesis; NAD(+) biosynthesis; quinolinate from L-kynurenine: step 2/3. Its function is as follows. Catalyzes the cleavage of L-kynurenine (L-Kyn) and L-3-hydroxykynurenine (L-3OHKyn) into anthranilic acid (AA) and 3-hydroxyanthranilic acid (3-OHAA), respectively. The sequence is that of Kynureninase from Cryptococcus neoformans var. neoformans serotype D (strain B-3501A) (Filobasidiella neoformans).